A 612-amino-acid chain; its full sequence is ETS-related transcription factor Elf-1 (612 aa).

4 positions are modified to phosphoserine: Ser110, Ser163, Ser167, and Ser168. Positions 156-169 are enriched in polar residues; that stretch reads VQETNADSPGASSP. Residues 156 to 199 are disordered; sequence VQETNADSPGASSPEQRKRKKGRKTKPPRPDSPTTTPNISVKKK. Positions 172–182 are enriched in basic residues; it reads RKRKKGRKTKP. Position 187 is a phosphoserine (Ser187). Thr190 is modified (phosphothreonine). The segment at residues 208–290 is a DNA-binding region (ETS); the sequence is IYLWEFLLAL…EGQRLVYQFK (83 aa). The disordered stretch occupies residues 300-361; that stretch reads DDEDPSSSIE…AANPKDPVEV (62 aa). Residues 305–322 are compositionally biased toward low complexity; that stretch reads SSSIESSDQSLSSTTASS. Positions 323 to 335 are enriched in polar residues; it reads RNQANRSRVSSSP. At Ser431 the chain carries Phosphoserine. Residues 562-577 are compositionally biased toward basic and acidic residues; sequence EVEKKAEDDLNEDAEK. The segment at 562-586 is disordered; the sequence is EVEKKAEDDLNEDAEKSAQQPQPYV.

Belongs to the ETS family. As to quaternary structure, binds to the underphosphorylated form of RB. May interact with other transcription factors in order to regulate specific genes. Interacts with RUNX1. Interacts with SP1; the interaction is inhibited by glycosylation of SP1. As to expression, predominantly found in hematopoietic cells. Detected in other cell types such as fibroblasts.

Its subcellular location is the nucleus. In terms of biological role, transcription factor that activates the LYN and BLK promoters. The chain is ETS-related transcription factor Elf-1 (Elf1) from Mus musculus (Mouse).